Reading from the N-terminus, the 64-residue chain is DNA gyrase inhibitor YacG (64 aa).

Residues Cys6, Cys9, Cys25, and Cys29 each coordinate Zn(2+).

The protein belongs to the DNA gyrase inhibitor YacG family. In terms of assembly, interacts with GyrB. Zn(2+) is required as a cofactor.

Functionally, inhibits all the catalytic activities of DNA gyrase by preventing its interaction with DNA. Acts by binding directly to the C-terminal domain of GyrB, which probably disrupts DNA binding by the gyrase. This is DNA gyrase inhibitor YacG from Haemophilus influenzae (strain ATCC 51907 / DSM 11121 / KW20 / Rd).